The sequence spans 206 residues: Small ribosomal subunit protein uS4 (206 aa).

Residues 96-156 (GRLDNVVYRM…EKAKKQSRVK (61 aa)) enclose the S4 RNA-binding domain.

This sequence belongs to the universal ribosomal protein uS4 family. In terms of assembly, part of the 30S ribosomal subunit. Contacts protein S5. The interaction surface between S4 and S5 is involved in control of translational fidelity.

Its function is as follows. One of the primary rRNA binding proteins, it binds directly to 16S rRNA where it nucleates assembly of the body of the 30S subunit. In terms of biological role, with S5 and S12 plays an important role in translational accuracy. The sequence is that of Small ribosomal subunit protein uS4 from Shigella flexneri.